The primary structure comprises 203 residues: Recombination protein RecR (203 aa).

The segment at 58-73 adopts a C4-type zinc-finger fold; sequence CDYCGNLDVVSICNIC. The 97-residue stretch at 81-177 folds into the Toprim domain; sequence SIIAIVESVA…KISKLASGIP (97 aa).

It belongs to the RecR family.

May play a role in DNA repair. It seems to be involved in an RecBC-independent recombinational process of DNA repair. It may act with RecF and RecO. The protein is Recombination protein RecR of Orientia tsutsugamushi (strain Boryong) (Rickettsia tsutsugamushi).